The primary structure comprises 207 residues: FMN-dependent NADH:quinone oxidoreductase 2 (207 aa).

Residues Ser-10, Ser-16–Ser-18, Met-96–Leu-99, and Ser-141–Gly-144 contribute to the FMN site.

The protein belongs to the azoreductase type 1 family. As to quaternary structure, homodimer. The cofactor is FMN.

It catalyses the reaction 2 a quinone + NADH + H(+) = 2 a 1,4-benzosemiquinone + NAD(+). The enzyme catalyses N,N-dimethyl-1,4-phenylenediamine + anthranilate + 2 NAD(+) = 2-(4-dimethylaminophenyl)diazenylbenzoate + 2 NADH + 2 H(+). Functionally, quinone reductase that provides resistance to thiol-specific stress caused by electrophilic quinones. In terms of biological role, also exhibits azoreductase activity. Catalyzes the reductive cleavage of the azo bond in aromatic azo compounds to the corresponding amines. This is FMN-dependent NADH:quinone oxidoreductase 2 from Trichormus variabilis (strain ATCC 29413 / PCC 7937) (Anabaena variabilis).